Reading from the N-terminus, the 252-residue chain is Geranylgeranylglyceryl phosphate synthase (252 aa).

Residues Asp26 and Ser55 each contribute to the Mg(2+) site. Sn-glycerol 1-phosphate contacts are provided by residues 174–180 (YLEAGSG), 205–206 (GG), and 227–228 (GT).

The protein belongs to the GGGP/HepGP synthase family. Group II subfamily. Requires Mg(2+) as cofactor.

It localises to the cytoplasm. It carries out the reaction sn-glycerol 1-phosphate + (2E,6E,10E)-geranylgeranyl diphosphate = sn-3-O-(geranylgeranyl)glycerol 1-phosphate + diphosphate. The protein operates within membrane lipid metabolism; glycerophospholipid metabolism. Functionally, prenyltransferase that catalyzes the transfer of the geranylgeranyl moiety of geranylgeranyl diphosphate (GGPP) to the C3 hydroxyl of sn-glycerol-1-phosphate (G1P). This reaction is the first ether-bond-formation step in the biosynthesis of archaeal membrane lipids. This Thermococcus gammatolerans (strain DSM 15229 / JCM 11827 / EJ3) protein is Geranylgeranylglyceryl phosphate synthase.